Reading from the N-terminus, the 579-residue chain is Folliculin (579 aa).

The interval 32-82 is disordered; that stretch reads GAGSGDGAGRGEPADEEEGGIQMSSRIRAHSPAEGASAESSSPGPKKSDMC. Phosphoserine is present on residues Ser62 and Ser73. The span at 63–76 shows a compositional bias: low complexity; sequence PAEGASAESSSPGP. Residues 86-242 enclose the uDENN FLCN/SMCR8-type domain; the sequence is RSLAAGHPGY…RNGNAARSLT (157 aa). Residues 285–309 adopt a coiled-coil conformation; it reads QMEQLAELEEESESWDNSEAEEEEK. The segment covering 294–308 has biased composition (acidic residues); the sequence is EESESWDNSEAEEEE. Residues 294–321 form a disordered region; sequence EESESWDNSEAEEEEKGPALPEGAEGRE. Phosphoserine is present on residues Ser302, Ser406, Ser537, Ser542, and Ser571. Positions 339–491 constitute a cDENN FLCN/SMCR8-type domain; sequence QPRKLSVFKS…ILNKMEAALT (153 aa). Residues 493–558 form the dDENN FLCN/SMCR8-type domain; it reads QNLSVDVVDQ…LLKFWMTGLS (66 aa).

It belongs to the folliculin family. Interacts (via C-terminus) with FNIP1 or FNIP2 (via C-terminus). Component of the lysosomal folliculin complex (LFC), composed of FLCN, FNIP1 (or FNIP2), RagA/RRAGA or RagB/RRAGB GDP-bound, RagC/RRAGC or RagD/RRAGD GTP-bound, and Ragulator. Interaction with FNIP1 or FNIP2 mediates indirect interaction with the PRKAA1, PRKAB1 and PRKAG1 subunits of 5'-AMP-activated protein kinase (AMPK). Interacts with HSP90AA1 in the presence of FNIP1. Interacts with HSP70, STUB1, CDC37, AHSA1, CCT2, STIP1, PTGES3 and PPP5C. Interacts with GABARAP; interaction takes place in the presence of FNIP1 and/or FNIP2. Interacts with RILP; the interaction is direct and promotes association between RILP and RAB34. Interacts with KIF3A and KIF3B. Interacts with lactate dehydrogenase LDHA, but not LDHB; the interaction is direct, may preferentially bind LDHA dimers rather than tetramers, and regulates LDHA activity, acting as an uncompetitive inhibitor. In terms of processing, phosphorylation by ULK1 modulates the interaction with GABARAP and is required to regulate autophagy.

It localises to the lysosome membrane. The protein resides in the cytoplasm. It is found in the cytosol. The protein localises to the cell projection. Its subcellular location is the cilium. It localises to the cytoskeleton. The protein resides in the microtubule organizing center. It is found in the centrosome. The protein localises to the spindle. Its subcellular location is the nucleus. With respect to regulation, GTPase-activating activity is inhibited in the folliculin complex (LFC), which stabilizes the GDP-bound state of RagA/RRAGA (or RagB/RRAGB), because Arg-164 is located far from the RagC/RRAGC or RagD/RRAGD nucleotide pocket. Disassembly of the LFC complex upon amino acid restimulation liberates the GTPase-activating activity. In terms of biological role, multi-functional protein, involved in both the cellular response to amino acid availability and in the regulation of glycolysis. GTPase-activating protein that plays a key role in the cellular response to amino acid availability through regulation of the non-canonical mTORC1 signaling cascade controlling the MiT/TFE factors TFEB and TFE3. Activates mTORC1 by acting as a GTPase-activating protein: specifically stimulates GTP hydrolysis by RagC/RRAGC or RagD/RRAGD, promoting the conversion to the GDP-bound state of RagC/RRAGC or RagD/RRAGD, and thereby activating the kinase activity of mTORC1. The GTPase-activating activity is inhibited during starvation and activated in presence of nutrients. Acts as a key component for non-canonical mTORC1-dependent control of the MiT/TFE factors TFEB and TFE3, while it is not involved in mTORC1-dependent phosphorylation of canonical RPS6KB1/S6K1 and EIF4EBP1/4E-BP1. In low-amino acid conditions, the lysosomal folliculin complex (LFC) is formed on the membrane of lysosomes, which inhibits the GTPase-activating activity of FLCN, inactivates mTORC1 and maximizes nuclear translocation of TFEB and TFE3. Upon amino acid restimulation, RagA/RRAGA (or RagB/RRAGB) nucleotide exchange promotes disassembly of the LFC complex and liberates the GTPase-activating activity of FLCN, leading to activation of mTORC1 and subsequent cytoplasmic retention of TFEB and TFE3. Indirectly acts as a positive regulator of Wnt signaling by promoting mTOR-dependent cytoplasmic retention of MiT/TFE factor TFE3. Required for the exit of hematopoietic stem cell from pluripotency by promoting mTOR-dependent cytoplasmic retention of TFE3, thereby increasing Wnt signaling. Involved in the control of embryonic stem cells differentiation; together with LAMTOR1 it is necessary to recruit and activate RagC/RRAGC and RagD/RRAGD at the lysosomes, and to induce exit of embryonic stem cells from pluripotency via non-canonical, mTOR-independent TFE3 inactivation. Acts as an inhibitor of browning of adipose tissue by regulating mTOR-dependent cytoplasmic retention of TFE3. In response to flow stress, regulates STK11/LKB1 accumulation and mTORC1 activation through primary cilia: may act by recruiting STK11/LKB1 to primary cilia for activation of AMPK resided at basal bodies, causing mTORC1 down-regulation. Together with FNIP1 and/or FNIP2, regulates autophagy: following phosphorylation by ULK1, interacts with GABARAP and promotes autophagy. Required for starvation-induced perinuclear clustering of lysosomes by promoting association of RILP with its effector RAB34. Regulates glycolysis by binding to lactate dehydrogenase LDHA, acting as an uncompetitive inhibitor. The protein is Folliculin of Bos taurus (Bovine).